We begin with the raw amino-acid sequence, 131 residues long: MSWQTYVDEHLMCEIEGLHLASTAIIGHAGTVWAQSTAFPQFKPEEITGIMKDFDEPGHLAPTGMFVAGAKYMVIQGEPGAVIRGKKGAGGITIKKTGQALVVGIYDEPMTPGQCNMVVERLGDYLLEQGL.

Residues C13 and C115 are joined by a disulfide bond. The short motif at 81-97 (AVIRGKKGAGGITIKKT) is the Involved in PIP2 interaction element. T111 carries the post-translational modification Phosphothreonine.

It belongs to the profilin family. In terms of assembly, occurs in many kinds of cells as a complex with monomeric actin in a 1:1 ratio. In terms of processing, phosphorylated by MAP kinases.

The protein localises to the cytoplasm. It localises to the cytoskeleton. Functionally, binds to actin and affects the structure of the cytoskeleton. At high concentrations, profilin prevents the polymerization of actin, whereas it enhances it at low concentrations. The protein is Profilin-3 of Olea europaea (Common olive).